Reading from the N-terminus, the 612-residue chain is Glycosyltransferase 25 family member (612 aa).

The N-terminal stretch at 1-20 (MNKQVIFGLLLACILVCISG) is a signal peptide. 4 N-linked (GlcNAc...) asparagine glycosylation sites follow: Asn106, Asn227, Asn263, and Asn524. Residues 609 to 612 (HQEL) carry the Prevents secretion from ER motif.

This sequence belongs to the glycosyltransferase 25 family.

The protein resides in the endoplasmic reticulum lumen. This chain is Glycosyltransferase 25 family member, found in Drosophila melanogaster (Fruit fly).